The chain runs to 100 residues: Putative membrane protein insertion efficiency factor (100 aa).

The interval aspartate 73–glycine 100 is disordered.

The protein belongs to the UPF0161 family.

The protein resides in the cell inner membrane. Could be involved in insertion of integral membrane proteins into the membrane. This chain is Putative membrane protein insertion efficiency factor, found in Synechococcus sp. (strain JA-3-3Ab) (Cyanobacteria bacterium Yellowstone A-Prime).